The sequence spans 274 residues: Dermonecrotic toxin LcsSicTox-betaIC1 (274 aa).

Residue His-5 is part of the active site. Mg(2+) contacts are provided by Glu-25 and Asp-27. His-41 serves as the catalytic Nucleophile. Disulfide bonds link Cys-45–Cys-51 and Cys-47–Cys-190. Asn-66 is a glycosylation site (N-linked (GlcNAc...) asparagine). Position 85 (Asp-85) interacts with Mg(2+).

It belongs to the arthropod phospholipase D family. Class II subfamily. Mg(2+) is required as a cofactor. Expressed by the venom gland.

It is found in the secreted. It carries out the reaction an N-(acyl)-sphingosylphosphocholine = an N-(acyl)-sphingosyl-1,3-cyclic phosphate + choline. The catalysed reaction is an N-(acyl)-sphingosylphosphoethanolamine = an N-(acyl)-sphingosyl-1,3-cyclic phosphate + ethanolamine. It catalyses the reaction a 1-acyl-sn-glycero-3-phosphocholine = a 1-acyl-sn-glycero-2,3-cyclic phosphate + choline. The enzyme catalyses a 1-acyl-sn-glycero-3-phosphoethanolamine = a 1-acyl-sn-glycero-2,3-cyclic phosphate + ethanolamine. Functionally, dermonecrotic toxins cleave the phosphodiester linkage between the phosphate and headgroup of certain phospholipids (sphingolipid and lysolipid substrates), forming an alcohol (often choline) and a cyclic phosphate. This toxin acts on sphingomyelin (SM). It may also act on ceramide phosphoethanolamine (CPE), lysophosphatidylcholine (LPC) and lysophosphatidylethanolamine (LPE), but not on lysophosphatidylserine (LPS), and lysophosphatidylglycerol (LPG). It acts by transphosphatidylation, releasing exclusively cyclic phosphate products as second products. Induces dermonecrosis, hemolysis, increased vascular permeability, edema, inflammatory response, and platelet aggregation. The chain is Dermonecrotic toxin LcsSicTox-betaIC1 from Loxosceles cf. spinulosa (strain GJB-2008) (Recluse spider).